The sequence spans 343 residues: MGTADERRFEVLRAIVADFVATHEPIGSKSLVERHNLGVSSATIRNDMAVLEAEGYIAQPHTSSGRVPTEKGYREFVDRLDDVKPLSMVERRAIQGFLESGVDLDDVLRRAVRLLAQLTRQVAVVQYPTLSTSKVRHLEVIALTPARLLVVVITDSGRVDQRIVELGDVIDDHQLSQLRELLGQALEGKKLAAASVAVADFAGQLSGAGGLGDAVGRSATVLLESLVEHTEERLLMGGTANLTRNAADFGGSLRSILEALEEQIVVLRLLAAQQEAGKVTVRIGHETEAEQIVGTSMVSTAYGSNDTVYGGMGVLGPTRMDYPGTIASVAAVALYIGEVLGAR.

The protein belongs to the HrcA family.

Negative regulator of class I heat shock genes (grpE-dnaK-dnaJ and groELS operons). Prevents heat-shock induction of these operons. The sequence is that of Heat-inducible transcription repressor HrcA from Mycobacterium ulcerans (strain Agy99).